The following is a 911-amino-acid chain: ATP-dependent DNA helicase Q-like 5 (911 aa).

Positions 1 to 84 (MDFDSDSDGS…PPPSPLFTNL (84 aa)) are disordered. Low complexity predominate over residues 20-48 (SFPSSPPQLQSPAKHVPPVSRKMTSSSSR). Residues 54–79 (PTHPPPNPSQEAPVPSPYPPPPPPSP) are compositionally biased toward pro residues. The Helicase ATP-binding domain maps to 278-448 (IKMILGGSST…MSSLEIPSTN (171 aa)). Residue 291–298 (LPTGAGKS) coordinates ATP. The DEAH box motif lies at 390–393 (DEAH). A Helicase C-terminal domain is found at 470 to 628 (RMKDLLILME…VFSTETKQHE (159 aa)).

The protein belongs to the helicase family. RecQ subfamily. In terms of tissue distribution, mostly expressed in roots, seedlings, shoots, shoot apical mersitem, flowers, and siliques.

The protein resides in the nucleus. It carries out the reaction Couples ATP hydrolysis with the unwinding of duplex DNA by translocating in the 3'-5' direction.. The catalysed reaction is ATP + H2O = ADP + phosphate + H(+). Functionally, 3'-5' DNA helicase that may play a role in the repair of DNA. This Arabidopsis thaliana (Mouse-ear cress) protein is ATP-dependent DNA helicase Q-like 5 (RECQL5).